The sequence spans 497 residues: Zinc finger protein 3 (497 aa).

A compositionally biased stretch (basic and acidic residues) spans 1–20 (MGTEKKEGLPKEETSEDSKP). The disordered stretch occupies residues 1-53 (MGTEKKEGLPKEETSEDSKPHGQTVEKLAQEVCHGHEFGEASEEDMSEGHLRE). Residues lysine 6 and lysine 11 each participate in a glycyl lysine isopeptide (Lys-Gly) (interchain with G-Cter in SUMO2) cross-link. C2H2-type zinc fingers lie at residues 136-158 (HTCK…MRVH), 164-186 (FECK…QRIH), 192-214 (FACT…HRIH), 220-242 (YKCE…QRIH), 248-270 (YECN…QRIH), 276-298 (HECS…QKIH), 304-326 (YLCN…QRIH), 332-354 (YECS…IRIH), 360-382 (YVCK…ERIH), 388-410 (YECF…QRIH), 416-438 (HQCN…QKIH), 444-466 (YECS…QRIH), and 472-494 (YECQ…QSVH).

It belongs to the krueppel C2H2-type zinc-finger protein family.

The protein resides in the nucleus. Functionally, may be involved in transcriptional regulation. This chain is Zinc finger protein 3 (Zfp3), found in Mus musculus (Mouse).